The following is a 399-amino-acid chain: Tyrosine--tRNA ligase (399 aa).

A 'HIGH' region motif is present at residues 42–51 (PTAPDIHLGH). Residues 226–230 (KMSKS) carry the 'KMSKS' region motif. Position 229 (lysine 229) interacts with ATP. The S4 RNA-binding domain occupies 337–398 (LTIGYILQRA…GKRRFAKVKV (62 aa)).

It belongs to the class-I aminoacyl-tRNA synthetase family. TyrS type 2 subfamily. Homodimer.

The protein resides in the cytoplasm. It carries out the reaction tRNA(Tyr) + L-tyrosine + ATP = L-tyrosyl-tRNA(Tyr) + AMP + diphosphate + H(+). In terms of biological role, catalyzes the attachment of tyrosine to tRNA(Tyr) in a two-step reaction: tyrosine is first activated by ATP to form Tyr-AMP and then transferred to the acceptor end of tRNA(Tyr). This Coxiella burnetii (strain RSA 493 / Nine Mile phase I) protein is Tyrosine--tRNA ligase.